Reading from the N-terminus, the 65-residue chain is Alpha-like toxin Bom4 (65 aa).

Positions 2-64 (RDAYIAQPEN…VPIRIPGKCH (63 aa)) constitute an LCN-type CS-alpha/beta domain. Disulfide bonds link C12/C63, C16/C36, C22/C46, and C26/C48.

This sequence belongs to the long (4 C-C) scorpion toxin superfamily. Sodium channel inhibitor family. Alpha subfamily. In terms of tissue distribution, expressed by the venom gland.

It localises to the secreted. Functionally, alpha toxins bind voltage-independently at site-3 of sodium channels (Nav) and inhibit the inactivation of the activated channels, thereby blocking neuronal transmission. This alpha-like toxin is highly toxic to mice and insects. The sequence is that of Alpha-like toxin Bom4 from Buthus occitanus mardochei (Moroccan scorpion).